The chain runs to 260 residues: Putative serine protease 45 (260 aa).

The 234-residue stretch at 1 to 234 folds into the Peptidase S1 domain; sequence MTRHWPWEVS…YTKWIKKQMS (234 aa). A disulfide bond links Cys19 and Cys35. His34 acts as the Charge relay system in catalysis. Asn55 is a glycosylation site (N-linked (GlcNAc...) asparagine). Catalysis depends on Asp82, which acts as the Charge relay system. Disulfide bonds link Cys116–Cys192, Cys151–Cys173, and Cys182–Cys210. Ser186 serves as the catalytic Charge relay system.

The protein belongs to the peptidase S1 family.

The protein is Putative serine protease 45 of Homo sapiens (Human).